Reading from the N-terminus, the 510-residue chain is Hepatic triacylglycerol lipase (510 aa).

A signal peptide spans 1–21 (MGNPLQISIFLVFCIFIQSSA). The N-linked (GlcNAc...) asparagine glycan is linked to Asn-79. Catalysis depends on Ser-169, which acts as the Nucleophile. Asp-195 serves as the catalytic Charge relay system. An essential for determining substrate specificity region spans residues 255–278 (CHFLELYKHIAEHGLNAITQTIKC). Catalysis depends on His-280, which acts as the Charge relay system. The region spanning 353–487 (YHYQFKIQFI…HPSQEKVFVN (135 aa)) is the PLAT domain. N-linked (GlcNAc...) asparagine glycosylation is present at Asn-398.

This sequence belongs to the AB hydrolase superfamily. Lipase family. In terms of assembly, homodimer.

The protein resides in the secreted. The enzyme catalyses a triacylglycerol + H2O = a diacylglycerol + a fatty acid + H(+). It carries out the reaction a 1-acyl-sn-glycero-3-phosphocholine + H2O = sn-glycerol 3-phosphocholine + a fatty acid + H(+). The catalysed reaction is a 1,2-diacyl-sn-glycero-3-phosphocholine + H2O = a 2-acyl-sn-glycero-3-phosphocholine + a fatty acid + H(+). It catalyses the reaction 1,2,3-tri-(9Z-octadecenoyl)-glycerol + H2O = di-(9Z)-octadecenoylglycerol + (9Z)-octadecenoate + H(+). The enzyme catalyses 1,2-di-(9Z-octadecenoyl)-sn-glycero-3-phosphocholine + H2O = (9Z-octadecenoyl)-sn-glycero-3-phosphocholine + (9Z)-octadecenoate + H(+). It carries out the reaction 1,2,3-tributanoylglycerol + H2O = dibutanoylglycerol + butanoate + H(+). The catalysed reaction is 1,2-dihexadecanoyl-sn-glycero-3-phosphocholine + H2O = hexadecanoyl-sn-glycero-3-phosphocholine + hexadecanoate + H(+). It catalyses the reaction 1,2-di-(9Z-octadecenoyl)-sn-glycerol + H2O = 2-(9Z-octadecenoyl)-glycerol + (9Z)-octadecenoate + H(+). The enzyme catalyses 1,2,3-tri-(9Z-octadecenoyl)-glycerol + H2O = 2,3-di-(9Z)-octadecenoyl-sn-glycerol + (9Z)-octadecenoate + H(+). It carries out the reaction 1-(9Z-octadecenoyl)-sn-glycero-3-phospho-L-serine + H2O = sn-glycero-3-phospho-L-serine + (9Z)-octadecenoate + H(+). The catalysed reaction is 1-hexadecanoyl-sn-glycero-3-phosphocholine + H2O = sn-glycerol 3-phosphocholine + hexadecanoate + H(+). It catalyses the reaction 1,3-di-(9Z-octadecenoyl)-glycerol + H2O = 3-(9Z-octadecenoyl)-sn-glycerol + (9Z)-octadecenoate + H(+). Catalyzes the hydrolysis of triglycerides and phospholipids present in circulating plasma lipoproteins, including chylomicrons, intermediate density lipoproteins (IDL), low density lipoproteins (LDL) of large size and high density lipoproteins (HDL), releasing free fatty acids (FFA) and smaller lipoprotein particles. Also exhibits lysophospholipase activity. Can hydrolyze both neutral lipid and phospholipid substrates but shows a greater binding affinity for neutral lipid substrates than phospholipid substrates. In native LDL, preferentially hydrolyzes the phosphatidylcholine species containing polyunsaturated fatty acids at sn-2 position. The polypeptide is Hepatic triacylglycerol lipase (Lipc) (Mus musculus (Mouse)).